The primary structure comprises 107 residues: FK506-binding protein 1 (107 aa).

In terms of domain architecture, PPIase FKBP-type spans 19–107; the sequence is GSNVTVHHAG…VFEVELITFK (89 aa).

This sequence belongs to the FKBP-type PPIase family.

The catalysed reaction is [protein]-peptidylproline (omega=180) = [protein]-peptidylproline (omega=0). Its activity is regulated as follows. Inhibited by both FK506 and rapamycin. In terms of biological role, PPIases accelerate the folding of proteins by catalyzing the cis-trans isomerization of proline imidic peptide bonds in oligopeptides. In Dictyostelium discoideum (Social amoeba), this protein is FK506-binding protein 1 (fkbp1).